Reading from the N-terminus, the 1420-residue chain is DNA-directed RNA polymerase subunit beta' (1420 aa).

4 residues coordinate Zn(2+): Cys-71, Cys-73, Cys-86, and Cys-89. The Mg(2+) site is built by Asp-461, Asp-463, and Asp-465. Zn(2+) is bound by residues Cys-815, Cys-889, Cys-896, and Cys-899.

This sequence belongs to the RNA polymerase beta' chain family. The RNAP catalytic core consists of 2 alpha, 1 beta, 1 beta' and 1 omega subunit. When a sigma factor is associated with the core the holoenzyme is formed, which can initiate transcription. Mg(2+) serves as cofactor. The cofactor is Zn(2+).

The catalysed reaction is RNA(n) + a ribonucleoside 5'-triphosphate = RNA(n+1) + diphosphate. Its function is as follows. DNA-dependent RNA polymerase catalyzes the transcription of DNA into RNA using the four ribonucleoside triphosphates as substrates. The sequence is that of DNA-directed RNA polymerase subunit beta' from Histophilus somni (strain 2336) (Haemophilus somnus).